The primary structure comprises 295 residues: Histamine N-methyltransferase (295 aa).

Ala2 carries the post-translational modification Blocked amino end (Ala). Glu28 serves as a coordination point for substrate. S-adenosyl-L-methionine-binding residues include Gly60, Glu89, Gln94, Ser120, and Ile143. A substrate-binding site is contributed by Asn284.

This sequence belongs to the class I-like SAM-binding methyltransferase superfamily. HNMT family. As to quaternary structure, monomer.

The protein resides in the cytoplasm. It carries out the reaction histamine + S-adenosyl-L-methionine = N(tau)-methylhistamine + S-adenosyl-L-homocysteine + H(+). Functionally, inactivates histamine by N-methylation. Plays an important role in degrading histamine and in regulating the airway response to histamine. The protein is Histamine N-methyltransferase (Hnmt) of Rattus norvegicus (Rat).